Here is a 425-residue protein sequence, read N- to C-terminus: Serine--tRNA ligase (425 aa).

Position 230 to 232 (230 to 232 (TSE)) interacts with L-serine. Position 261–263 (261–263 (RKE)) interacts with ATP. Residue E284 coordinates L-serine. 348 to 351 (EISS) contacts ATP. S385 serves as a coordination point for L-serine.

This sequence belongs to the class-II aminoacyl-tRNA synthetase family. Type-1 seryl-tRNA synthetase subfamily. As to quaternary structure, homodimer. The tRNA molecule binds across the dimer.

It is found in the cytoplasm. The enzyme catalyses tRNA(Ser) + L-serine + ATP = L-seryl-tRNA(Ser) + AMP + diphosphate + H(+). It carries out the reaction tRNA(Sec) + L-serine + ATP = L-seryl-tRNA(Sec) + AMP + diphosphate + H(+). It functions in the pathway aminoacyl-tRNA biosynthesis; selenocysteinyl-tRNA(Sec) biosynthesis; L-seryl-tRNA(Sec) from L-serine and tRNA(Sec): step 1/1. Catalyzes the attachment of serine to tRNA(Ser). Is also able to aminoacylate tRNA(Sec) with serine, to form the misacylated tRNA L-seryl-tRNA(Sec), which will be further converted into selenocysteinyl-tRNA(Sec). This Wolbachia pipientis wMel protein is Serine--tRNA ligase.